Reading from the N-terminus, the 103-residue chain is uncharacterized protein (103 aa).

The signal sequence occupies residues Met1–Ala22.

The protein to the N-terminal of the FimA/PapA family of fimbria proteins.

This is an uncharacterized protein from Escherichia coli (strain K12).